We begin with the raw amino-acid sequence, 209 residues long: N-(5'-phosphoribosyl)anthranilate isomerase (209 aa).

The protein belongs to the TrpF family.

The catalysed reaction is N-(5-phospho-beta-D-ribosyl)anthranilate = 1-(2-carboxyphenylamino)-1-deoxy-D-ribulose 5-phosphate. It functions in the pathway amino-acid biosynthesis; L-tryptophan biosynthesis; L-tryptophan from chorismate: step 3/5. This is N-(5'-phosphoribosyl)anthranilate isomerase from Pelobacter propionicus (strain DSM 2379 / NBRC 103807 / OttBd1).